The sequence spans 474 residues: tRNA (adenine(58)-N(1))-methyltransferase catalytic subunit trm61 (474 aa).

The segment at 75–109 (DTGSRGRTQKMKRKADELDSSTQAEDKPSPQTPVA) is disordered. S-adenosyl-L-methionine is bound by residues 163 to 165 (SGS), glutamate 197, arginine 202, 225 to 226 (DV), and aspartate 250. Disordered regions lie at residues 356 to 390 (LFRA…VPVY) and 423 to 474 (DEKR…SQKE). The span at 358 to 367 (RATQNQSDGD) shows a compositional bias: polar residues. Basic and acidic residues predominate over residues 423–432 (DEKRCREKWP). Over residues 434-443 (NRVQEPQGPQ) the composition is skewed to polar residues. Positions 450–474 (KRESREKRDLQRKEQSQPETESQKE) are enriched in basic and acidic residues.

The protein belongs to the class I-like SAM-binding methyltransferase superfamily. TRM61 family. Heterotetramer; composed of two copies of TRM6 and two copies of TRM61.

Its subcellular location is the nucleus. The catalysed reaction is adenosine(58) in tRNA + S-adenosyl-L-methionine = N(1)-methyladenosine(58) in tRNA + S-adenosyl-L-homocysteine + H(+). Functionally, catalytic subunit of tRNA (adenine-N(1)-)-methyltransferase, which catalyzes the formation of N(1)-methyladenine at position 58 (m1A58) in initiator methionyl-tRNA. This chain is tRNA (adenine(58)-N(1))-methyltransferase catalytic subunit trm61 (trm61), found in Aspergillus oryzae (strain ATCC 42149 / RIB 40) (Yellow koji mold).